The sequence spans 46 residues: Protein PsbN (46 aa).

Residues 5–27 (TLVTLFVSGLLMSFTGYALYTAF) form a helical membrane-spanning segment.

It belongs to the PsbN family.

The protein resides in the plastid membrane. In terms of biological role, may play a role in photosystem I and II biogenesis. This chain is Protein PsbN, found in Cuscuta obtusiflora (Peruvian dodder).